We begin with the raw amino-acid sequence, 370 residues long: N-acetyldiaminopimelate deacetylase (370 aa).

Residue Asp-67 is part of the active site. The Proton acceptor role is filled by Glu-126.

It belongs to the peptidase M20A family. N-acetyldiaminopimelate deacetylase subfamily.

The catalysed reaction is N-acetyl-(2S,6S)-2,6-diaminopimelate + H2O = (2S,6S)-2,6-diaminopimelate + acetate. It participates in amino-acid biosynthesis; L-lysine biosynthesis via DAP pathway; LL-2,6-diaminopimelate from (S)-tetrahydrodipicolinate (acetylase route): step 3/3. Functionally, catalyzes the conversion of N-acetyl-diaminopimelate to diaminopimelate and acetate. This chain is N-acetyldiaminopimelate deacetylase, found in Exiguobacterium sibiricum (strain DSM 17290 / CCUG 55495 / CIP 109462 / JCM 13490 / 255-15).